Reading from the N-terminus, the 601-residue chain is Elongation factor 4 (601 aa).

The tr-type G domain occupies 6-188 (KNIRNFSIIA…QIIKKIPAPD (183 aa)). GTP contacts are provided by residues 18-23 (DHGKST) and 135-138 (NKID).

Belongs to the TRAFAC class translation factor GTPase superfamily. Classic translation factor GTPase family. LepA subfamily.

It localises to the cell membrane. The catalysed reaction is GTP + H2O = GDP + phosphate + H(+). Its function is as follows. Required for accurate and efficient protein synthesis under certain stress conditions. May act as a fidelity factor of the translation reaction, by catalyzing a one-codon backward translocation of tRNAs on improperly translocated ribosomes. Back-translocation proceeds from a post-translocation (POST) complex to a pre-translocation (PRE) complex, thus giving elongation factor G a second chance to translocate the tRNAs correctly. Binds to ribosomes in a GTP-dependent manner. This Buchnera aphidicola subsp. Schizaphis graminum (strain Sg) protein is Elongation factor 4.